Reading from the N-terminus, the 952-residue chain is Ubiquitin carboxyl-terminal hydrolase 15 (952 aa).

Ala2 is subject to N-acetylalanine. Residues Ala2–Gly223 are mediates interaction with SART3. One can recognise a DUSP domain in the interval Ala7–Val118. Thr226 bears the Phosphothreonine mark. One can recognise a USP domain in the interval Cys260–Gln904. Cys269 (nucleophile) is an active-site residue. The residue at position 573 (Thr573) is a Phosphothreonine. The disordered stretch occupies residues Thr598–Cys666. The span at Met627–Ser644 shows a compositional bias: acidic residues. His862 functions as the Proton acceptor in the catalytic mechanism. Residues Ser923–Asn952 form a disordered region. The segment covering Glu931–Asn945 has biased composition (acidic residues). A phosphoserine mark is found at Ser932 and Ser936.

The protein belongs to the peptidase C19 family. In terms of assembly, a homodimer structure has been reported; however it is unclear whether the protein form a homodimer in vivo. Identified in a complex with the COP9 signalosome complex (CSN). Interacts with SMAD1, SMAD2 and SMAD3; the interaction is direct. Forms a complex with SMURF2 and SMAD7. Interacts with TGFBR1. Interacts with SART3; the interaction is direct. May interact with RNF20 and RNF40. May interact with PRKN. Interacts with INCA1. Phosphorylated. Phosphorylation protects against ubiquitination and subsequent degradation by the proteasome. Post-translationally, ubiquitinated, leading to degradation by the proteasome.

It localises to the cytoplasm. The protein resides in the nucleus. It is found in the mitochondrion. It carries out the reaction Thiol-dependent hydrolysis of ester, thioester, amide, peptide and isopeptide bonds formed by the C-terminal Gly of ubiquitin (a 76-residue protein attached to proteins as an intracellular targeting signal).. Hydrolase that removes conjugated ubiquitin from target proteins and regulates various pathways such as the TGF-beta receptor signaling, NF-kappa-B and RNF41/NRDP1-PRKN pathways. Acts as a key regulator of TGF-beta receptor signaling pathway, but the precise mechanism is still unclear: according to a report, acts by promoting deubiquitination of monoubiquitinated R-SMADs (SMAD1, SMAD2 and/or SMAD3), thereby alleviating inhibition of R-SMADs and promoting activation of TGF-beta target genes. According to another reports, regulates the TGF-beta receptor signaling pathway by mediating deubiquitination and stabilization of TGFBR1, leading to an enhanced TGF-beta signal. Able to mediate deubiquitination of monoubiquitinated substrates, 'Lys-27'-, 'Lys-48'- and 'Lys-63'-linked polyubiquitin chains. May also regulate gene expression and/or DNA repair through the deubiquitination of histone H2B. Acts as an inhibitor of mitophagy by counteracting the action of parkin (PRKN): hydrolyzes cleavage of 'Lys-48'- and 'Lys-63'-linked polyubiquitin chains attached by parkin on target proteins such as MFN2, thereby reducing parkin's ability to drive mitophagy. Acts as an associated component of COP9 signalosome complex (CSN) and regulates different pathways via this association: regulates NF-kappa-B by mediating deubiquitination of NFKBIA and deubiquitinates substrates bound to VCP. Involved in endosome organization by mediating deubiquitination of SQSTM1: ubiquitinated SQSTM1 forms a molecular bridge that restrains cognate vesicles in the perinuclear region and its deubiquitination releases target vesicles for fast transport into the cell periphery. Acts as a negative regulator of antifungal immunity by mediating 'Lys-27'-linked deubiquitination of CARD9, thereby inactivating CARD9. The sequence is that of Ubiquitin carboxyl-terminal hydrolase 15 (USP15) from Bos taurus (Bovine).